Reading from the N-terminus, the 275-residue chain is MEMO1 family protein Nmar_0215 (275 aa).

The protein belongs to the MEMO1 family.

The sequence is that of MEMO1 family protein Nmar_0215 from Nitrosopumilus maritimus (strain SCM1).